We begin with the raw amino-acid sequence, 156 residues long: uncharacterized protein (156 aa).

The N-terminal stretch at M1–A22 is a signal peptide. The GPI-anchor amidated serine moiety is linked to residue S129. Residues G130–L156 constitute a propeptide, removed in mature form.

It localises to the cell membrane. This is an uncharacterized protein from Schizosaccharomyces pombe (strain 972 / ATCC 24843) (Fission yeast).